Reading from the N-terminus, the 226-residue chain is Protein-L-isoaspartate O-methyltransferase (226 aa).

Serine 75 is an active-site residue.

This sequence belongs to the methyltransferase superfamily. L-isoaspartyl/D-aspartyl protein methyltransferase family.

Its subcellular location is the cytoplasm. It carries out the reaction [protein]-L-isoaspartate + S-adenosyl-L-methionine = [protein]-L-isoaspartate alpha-methyl ester + S-adenosyl-L-homocysteine. Functionally, catalyzes the methyl esterification of L-isoaspartyl residues in peptides and proteins that result from spontaneous decomposition of normal L-aspartyl and L-asparaginyl residues. It plays a role in the repair and/or degradation of damaged proteins. The sequence is that of Protein-L-isoaspartate O-methyltransferase from Lawsonia intracellularis (strain PHE/MN1-00).